A 1789-amino-acid chain; its full sequence is Genome polyprotein (1789 aa).

Residues 1 to 25 are disordered; that stretch reads MMMASKDVVPTAASSENANNNSSIK. The interaction with host MAP1LC3A/LC3 stretch occupies residues 1-183; sequence MMMASKDVVP…MCPLPPVDQR (183 aa). Residues 12 to 23 are compositionally biased toward low complexity; sequence AASSENANNNSS. The interval 184–398 is interaction with NTPase; sequence STTPATEPTI…ASLLPDFHLQ (215 aa). The segment at 301 to 398 is interaction with NS4; that stretch reads HPTQDWSRDT…ASLLPDFHLQ (98 aa). Host ER membrane association regions lie at residues 318–349 and 360–398; these read KLEMVRDAVLAAINGLVSRPFKDLLGKLKPLN and TFMGVVEMVVLLLELFGIFWNPPDVSNFIASLLPDFHLQ. An interaction with NS1-2 and NS4 and homooligomerization region spans residues 399–574; the sequence is GPEDLARDLV…GKTKAAEHLA (176 aa). An SF3 helicase domain is found at 532-697; that stretch reads RISMARAALA…EHTRKVSPGD (166 aa). 560–567 contributes to the ATP binding site; it reads GPPGIGKT. Residues 651–756 form an important for mitochondrion targeting region; that stretch reads AIVITTNAPG…AVALTMERQD (106 aa). Positions 826–832 are functions as endoplasmic reticulum export signal; sequence YIIESDG. A host membrane association region spans residues 865–910; that stretch reads RAVAYASCFQSAITTILQMAGSALVINRAVKRMFGTRTAAMALEGP. Residues 958–981 form a disordered region; that stretch reads DAVPEGKNKGKTKKGRGRKNNYNA. Over residues 966–976 the composition is skewed to basic residues; the sequence is KGKTKKGRGRK. The segment at 989 to 994 is acidic; sequence DEEYEE. Residue Y992 is modified to O-(5'-phospho-RNA)-tyrosine. The interaction with host EIF4G stretch occupies residues 1084–1100; it reads WADDDREVDYNEKINFE. The region spanning 1101–1281 is the Peptidase C37 domain; it reads APPTLWSRVT…QAGEGETALE (181 aa). Active-site for 3CLpro activity residues include H1130, E1154, and C1239. Positions 1516 to 1637 constitute a RdRp catalytic domain; the sequence is KNHFDADYTA…STDIDFDPAR (122 aa). Residues D1520, D1522, D1624, and E1625 each coordinate Mg(2+).

As to quaternary structure, homodimer. Homooligomer. Interacts with NTPase; this interaction increases the proapoptotic activity of the NTPase and is crucial for the formation of the viral replication complex. Interacts with NS4; this interaction is crucial for the formation of the viral replication complex. Interacts (via N-terminus) with host VAPA. Interacts with host MAP1LC3A/LC3; this interaction does not seem to be linked to host autophagy, but rather plays a role in the formation of viral factories. Homooligomer. Interacts with NS1-2; this interaction increases the proapoptotic activity of the NTPase and is crucial for the formation of the viral replication complex. Interacts with NS4; this interaction increases the proapoptotic activity of the NTPase. In terms of assembly, homodimer. Monomer; in solution. As to quaternary structure, interacts with NTPase; this interaction increases the proapoptotic activity of the NTPase. Interacts with NS1-2; this interaction is crucial for the formation of the viral replication complex. Monomer. Interacts with the RNA-directed RNA polymerase; this interaction induces the multimerization of the RdRp and enhances its activity. Interacts with host IEF4G1; this interaction plays a role in translation of viral proteins. In terms of assembly, homohexamer; also forms fibrous hexameric oligomer. Interacts with the viral genome-linked protein; this interaction induces the multimerization of the RdRp and enhances its activity. The cofactor is Mg(2+). Requires Mn(2+) as cofactor. In terms of processing, specific enzymatic cleavages in vivo yield mature proteins. 3CLpro is first autocatalytically cleaved, then processes the whole polyprotein. NS1/2-3 and NS3-4 sites are cleaved rapidly and NS4-5, NS5-6, and NS6-7 sites are processed subsequently and less efficiently. VPg is uridylylated by the polymerase and is covalently attached to the 5'-end of the polyadenylated genomic and subgenomic RNAs. This uridylylated form acts as a nucleotide-peptide primer for the polymerase. Post-translationally, cleaved by host CASP3/caspase 3 at 18-22 h.p.i. The cleavage allows NS1 secretion, which is essential for intestinal infection and resistance to IFN-lambda.

The protein resides in the host Golgi apparatus membrane. It localises to the secreted. Its subcellular location is the host endoplasmic reticulum membrane. The protein localises to the host cytoplasm. It is found in the host perinuclear region. The enzyme catalyses a ribonucleoside 5'-triphosphate + H2O = a ribonucleoside 5'-diphosphate + phosphate + H(+). It catalyses the reaction Endopeptidase with a preference for cleavage when the P1 position is occupied by Glu-|-Xaa and the P1' position is occupied by Gly-|-Yaa.. It carries out the reaction RNA(n) + a ribonucleoside 5'-triphosphate = RNA(n+1) + diphosphate. Its activity is regulated as follows. Inhibited by the chemical compound K36/GC376, which covalently binds to the nucleophilic cysteine residue. Inhibited by various macrocyclic inhibitors. Inhibited by the guanidine salt GuHCl. Induces the proliferation of the host smooth ER membranes forming long tubular structures. These remodeled membranes probably form the viral factories that contain the replication complex. Induces the disassembly of host Golgi. May play a role in viral replication by interacting with host VAPA, a vesicle-associated membrane protein that plays a role in SNARE-mediated vesicle fusion. This interaction may target replication complex to intracellular membranes. In terms of biological role, displays NTPase activity and RNA helix-unwinding activity. Displays RNA chaperone-like activity and destabilizes dsRNA. Induces the formation of convoluted membranes derived from the host ER. These remodeled membranes probably form the viral factories that contain the replication complex. Initiates host cell death by targeting the mitochondrial outer membrane, leading to the permeabilization of mitochondria, programmed host cell death and viral egress. Probably plays a role in preventing the assembly of host stress granules. Functionally, probable key protein responsible for the formation of membrane alterations by the virus. Induces the formation of convoluted membranes derived from the host ER. These remodeled membranes probably form the viral factories that contain the replication complex. May play a role in targeting replication complex to intracellular membranes. Induces the disassembly of host Golgi and antagonism of Golgi-dependent cellular protein secretion, probably via the mislocalization of COPII-coated vesicles. Its function is as follows. Viral genome-linked protein is covalently linked to the 5'-end of the positive-strand, negative-strand genomic RNAs and subgenomic RNA. Acts as a genome-linked replication primer. May recruit ribosome to viral RNA thereby promoting viral proteins translation. Interacts with host translation initiation complex to allow the translation of viral proteins. Induces the formation of aggregates of RNA-directed RNA polymerase in the presence of RNA. Through its interaction with the viral RNA-directed RNA polymerase, plays a crucial role in enhancing the polymerase activity. Processes the polyprotein. 3CLpro-RdRp is first released by autocleavage, then all other proteins are cleaved. May cleave host polyadenylate-binding protein thereby inhibiting cellular translation. In terms of biological role, replicates genomic and antigenomic RNA by recognizing replications specific signals. Also transcribes a subgenomic mRNA by initiating RNA synthesis internally on antigenomic RNA. This sgRNA codes for structural proteins. Catalyzes the covalent attachment VPg with viral RNAs. The polypeptide is Genome polyprotein (Norovirus (strain Human/NoV/United States/Norwalk/1968/GI) (Hu/NV/NV/1968/US)).